A 152-amino-acid chain; its full sequence is Small ribosomal subunit protein uS13 (152 aa).

Belongs to the universal ribosomal protein uS13 family.

Its subcellular location is the cytoplasm. In terms of biological role, located at the top of the head of the 40S subunit, it contacts several helices of the 18S rRNA. The polypeptide is Small ribosomal subunit protein uS13 (RPS18) (Argopecten irradians (Bay scallop)).